The sequence spans 448 residues: Probable cytosolic Fe-S cluster assembly factor Bm6838 (448 aa).

Cysteine 27, cysteine 66, cysteine 69, cysteine 72, cysteine 170, cysteine 226, cysteine 370, and cysteine 374 together coordinate [4Fe-4S] cluster.

This sequence belongs to the NARF family.

Its function is as follows. Component of the cytosolic iron-sulfur (Fe/S) protein assembly machinery. Required for maturation of extramitochondrial Fe/S proteins. The polypeptide is Probable cytosolic Fe-S cluster assembly factor Bm6838 (Brugia malayi (Filarial nematode worm)).